The following is a 147-amino-acid chain: Acidic phospholipase A2 S7-48J (147 aa).

The first 19 residues, 1–19 (MYPAHLLVLLAVCVSLLGA), serve as a signal peptide directing secretion. Positions 20 to 27 (SDIPPQPL) are excised as a propeptide. Intrachain disulfides connect Cys38-Cys99, Cys54-Cys146, Cys56-Cys72, Cys71-Cys127, Cys78-Cys120, Cys88-Cys113, and Cys106-Cys118. The Ca(2+) site is built by Tyr55, Gly57, and Gly59. His75 is a catalytic residue. Asp76 is a binding site for Ca(2+). Residue Asp121 is part of the active site.

Belongs to the phospholipase A2 family. Group I subfamily. D49 sub-subfamily. The cofactor is Ca(2+). In terms of tissue distribution, expressed by the venom gland.

Its subcellular location is the secreted. It carries out the reaction a 1,2-diacyl-sn-glycero-3-phosphocholine + H2O = a 1-acyl-sn-glycero-3-phosphocholine + a fatty acid + H(+). Snake venom phospholipase A2 (PLA2) that inhibits collagen-induced platelet aggregation. PLA2 catalyzes the calcium-dependent hydrolysis of the 2-acyl groups in 3-sn-phosphoglycerides. The protein is Acidic phospholipase A2 S7-48J of Austrelaps superbus (Lowland copperhead snake).